Here is a 225-residue protein sequence, read N- to C-terminus: uncharacterized protein (225 aa).

Glu69, Glu71, and Asp100 together coordinate a divalent metal cation.

Belongs to the FAH family.

This is an uncharacterized protein from Pyrococcus abyssi (strain GE5 / Orsay).